We begin with the raw amino-acid sequence, 220 residues long: Flavin-dependent thymidylate synthase (220 aa).

Residues 1-208 (MKIDILDKGF…PWTFEAFLKY (208 aa)) form the ThyX domain. Residues T55, 78–81 (RHRI), and E86 each bind FAD. Residues 75–78 (QWFR), 86–90 (ELSGR), and R147 each bind dUMP. A ThyX motif motif is present at residues 78-88 (RHRIASYNELS). Residues 163 to 165 (NAR) and N169 each bind FAD. R174 provides a ligand contact to dUMP. Residue R174 is the Involved in ionization of N3 of dUMP, leading to its activation of the active site.

It belongs to the thymidylate synthase ThyX family. As to quaternary structure, homotetramer. FAD is required as a cofactor.

The catalysed reaction is dUMP + (6R)-5,10-methylene-5,6,7,8-tetrahydrofolate + NADPH + H(+) = dTMP + (6S)-5,6,7,8-tetrahydrofolate + NADP(+). It catalyses the reaction dUMP + formaldehyde + NADPH + H(+) = dTMP + NADP(+) + H2O. Its pathway is pyrimidine metabolism; dTTP biosynthesis. Functionally, catalyzes the reductive methylation of 2'-deoxyuridine-5'-monophosphate (dUMP or deoxyuridylate) to 2'-deoxythymidine-5'-monophosphate (dTMP or deoxythymidylate) while utilizing 5,10-methylenetetrahydrofolate (mTHF) as the methylene donor, and NAD(P)H and FADH(2) as the reductant. This reaction is a critical step in DNA biosynthesis. Can also use formaldehyde instead of mTHF as a direct methylene donor for dTMP synthesis. However, the tighter binding of ThyX to mTHF (KD of 4 uM) compared to formaldehyde (KD of 20 mM) confirms that methylene tetrahydrofolate acts as the biological carbon donor for ThyX, serving as a formaldehyde carrier/transporter and thus avoiding genotoxic effects. The chain is Flavin-dependent thymidylate synthase from Thermotoga maritima (strain ATCC 43589 / DSM 3109 / JCM 10099 / NBRC 100826 / MSB8).